A 276-amino-acid polypeptide reads, in one-letter code: Large ribosomal subunit protein uL2 (276 aa).

Positions 224 to 276 are disordered; it reads AMNPIDHPHGGGEGKTSGGRNPVTPWGVSTKGKKTRKKNKSSNKYIKRVSDKG. Over residues 254-270 the composition is skewed to basic residues; sequence KGKKTRKKNKSSNKYIK.

It belongs to the universal ribosomal protein uL2 family. In terms of assembly, part of the 50S ribosomal subunit. Forms a bridge to the 30S subunit in the 70S ribosome.

Its function is as follows. One of the primary rRNA binding proteins. Required for association of the 30S and 50S subunits to form the 70S ribosome, for tRNA binding and peptide bond formation. It has been suggested to have peptidyltransferase activity; this is somewhat controversial. Makes several contacts with the 16S rRNA in the 70S ribosome. This Ehrlichia ruminantium (strain Gardel) protein is Large ribosomal subunit protein uL2.